A 496-amino-acid polypeptide reads, in one-letter code: Nectin 1a (496 aa).

A signal peptide spans 1 to 20 (MMFINLLLRLMCVFLIGADG). Residues 21–349 (QMVQMESSKA…FQDQQQAGVV (329 aa)) are Extracellular-facing. Positions 34–138 (GSQVELPCQF…GNRENMVNLT (105 aa)) constitute an Ig-like V-type domain. The cysteines at positions 41 and 121 are disulfide-linked. Residues Asn62 and Asn136 are each glycosylated (N-linked (GlcNAc...) asparagine). 2 Ig-like C2-type domains span residues 143 to 238 (PMIQ…VTLN) and 243 to 330 (PEVI…VIVT). Cystine bridges form between Cys168-Cys222 and Cys265-Cys312. Residue Asn282 is glycosylated (N-linked (GlcNAc...) asparagine). The chain crosses the membrane as a helical span at residues 350 to 370 (IGGAVVCGTVLLAAVTLLVVF). Residues 371–496 (LYRRRCMFKG…SVISKEEWYV (126 aa)) are Cytoplasmic-facing.

It belongs to the nectin family. As to quaternary structure, cis- and trans-homodimer. Can form trans-heterodimers. Expressed in the developing eye and nervous system.

It is found in the cell membrane. Its subcellular location is the cell junction. The protein resides in the adherens junction. In terms of biological role, cell adhesion molecule that promotes cell-cell contacts and plays important roles in the development of the nervous system. Acts by forming homophilic or heterophilic trans-dimers. This chain is Nectin 1a, found in Danio rerio (Zebrafish).